Consider the following 353-residue polypeptide: Photosystem II D2 protein (353 aa).

Thr-2 carries the post-translational modification N-acetylthreonine. Position 2 is a phosphothreonine (Thr-2). A helical membrane pass occupies residues 41 to 61 (CAYFALGGWFTGTTFVTSWYT). Position 118 (His-118) interacts with chlorophyll a. Residues 125-141 (GFMLRQFELARSVQLRP) form a helical membrane-spanning segment. Residues Gln-130 and Asn-143 each coordinate pheophytin a. The helical transmembrane segment at 153–166 (VFVSVFLIYPLGQS) threads the bilayer. His-198 contributes to the chlorophyll a binding site. A helical membrane pass occupies residues 208-228 (AALLCAIHGATVENTLFEDGD). Positions 215 and 262 each coordinate a plastoquinone. His-215 serves as a coordination point for Fe cation. His-269 provides a ligand contact to Fe cation. The chain crosses the membrane as a helical span at residues 279–295 (GLWMSALGVVGLALNLR).

The protein belongs to the reaction center PufL/M/PsbA/D family. PSII is composed of 1 copy each of membrane proteins PsbA, PsbB, PsbC, PsbD, PsbE, PsbF, PsbH, PsbI, PsbJ, PsbK, PsbL, PsbM, PsbT, PsbX, PsbY, PsbZ, Psb30/Ycf12, at least 3 peripheral proteins of the oxygen-evolving complex and a large number of cofactors. It forms dimeric complexes. The cofactor is The D1/D2 heterodimer binds P680, chlorophylls that are the primary electron donor of PSII, and subsequent electron acceptors. It shares a non-heme iron and each subunit binds pheophytin, quinone, additional chlorophylls, carotenoids and lipids. There is also a Cl(-1) ion associated with D1 and D2, which is required for oxygen evolution. The PSII complex binds additional chlorophylls, carotenoids and specific lipids..

It localises to the plastid. It is found in the chloroplast thylakoid membrane. It catalyses the reaction 2 a plastoquinone + 4 hnu + 2 H2O = 2 a plastoquinol + O2. Photosystem II (PSII) is a light-driven water:plastoquinone oxidoreductase that uses light energy to abstract electrons from H(2)O, generating O(2) and a proton gradient subsequently used for ATP formation. It consists of a core antenna complex that captures photons, and an electron transfer chain that converts photonic excitation into a charge separation. The D1/D2 (PsbA/PsbD) reaction center heterodimer binds P680, the primary electron donor of PSII as well as several subsequent electron acceptors. D2 is needed for assembly of a stable PSII complex. This Spinacia oleracea (Spinach) protein is Photosystem II D2 protein.